We begin with the raw amino-acid sequence, 861 residues long: FO synthase (861 aa).

Radical SAM core domains are found at residues 69-319 and 528-763; these read ITYS…LQAP and VTYI…LLHP. The segment at 70-401 is cofG-like; that stretch reads TYSKSVFIPL…PRLLPHVRAL (332 aa). Positions 83, 87, 90, 542, 546, and 549 each coordinate [4Fe-4S] cluster. A cofH-like region spans residues 505–838; sequence DGPALDALTR…KPRTTLYGEV (334 aa).

In the N-terminal section; belongs to the radical SAM superfamily. CofG family. The protein in the C-terminal section; belongs to the radical SAM superfamily. CofH family. [4Fe-4S] cluster serves as cofactor.

It carries out the reaction 5-amino-6-(D-ribitylamino)uracil + L-tyrosine + S-adenosyl-L-methionine = 5-amino-5-(4-hydroxybenzyl)-6-(D-ribitylimino)-5,6-dihydrouracil + 2-iminoacetate + 5'-deoxyadenosine + L-methionine + H(+). The enzyme catalyses 5-amino-5-(4-hydroxybenzyl)-6-(D-ribitylimino)-5,6-dihydrouracil + S-adenosyl-L-methionine = 7,8-didemethyl-8-hydroxy-5-deazariboflavin + 5'-deoxyadenosine + L-methionine + NH4(+) + H(+). It functions in the pathway cofactor biosynthesis; coenzyme F0 biosynthesis. Its function is as follows. Catalyzes the radical-mediated synthesis of 7,8-didemethyl-8-hydroxy-5-deazariboflavin (FO) from 5-amino-6-(D-ribitylamino)uracil and L-tyrosine. The sequence is that of FO synthase (fbiC) from Streptomyces avermitilis (strain ATCC 31267 / DSM 46492 / JCM 5070 / NBRC 14893 / NCIMB 12804 / NRRL 8165 / MA-4680).